Consider the following 414-residue polypeptide: MANSC domain-containing protein 1 (414 aa).

Residues 1–24 form the signal peptide; the sequence is MLFRGTSLAYSLLVISFLTPRSSA. The Extracellular portion of the chain corresponds to 25 to 369; the sequence is GQNCLTKSLE…HGLSFEKWLL (345 aa). Residues 32–116 form the MANSC domain; it reads SLEDVVIDIQ…LKPAKGLVTY (85 aa). N-linked (GlcNAc...) asparagine glycans are attached at residues Asn128, Asn234, and Asn335. A disordered region spans residues 311–339; that stretch reads FQGGSTLTSDPRHGKSSTSESSITNKTAS. A compositionally biased stretch (polar residues) spans 326-338; sequence SSTSESSITNKTA. The helical transmembrane segment at 370-392 threads the bilayer; sequence IGTLLCGVLFLVIGLVLLGRMLV. Topologically, residues 393–414 are cytoplasmic; sequence EALRRKRYSRLDYLINGIYVDI.

The protein resides in the membrane. The protein is MANSC domain-containing protein 1 (Mansc1) of Mus musculus (Mouse).